The chain runs to 881 residues: Phosphoenolpyruvate carboxylase (881 aa).

Catalysis depends on residues H138 and K545.

This sequence belongs to the PEPCase type 1 family. It depends on Mg(2+) as a cofactor.

It carries out the reaction oxaloacetate + phosphate = phosphoenolpyruvate + hydrogencarbonate. In terms of biological role, forms oxaloacetate, a four-carbon dicarboxylic acid source for the tricarboxylic acid cycle. The polypeptide is Phosphoenolpyruvate carboxylase (Shewanella oneidensis (strain ATCC 700550 / JCM 31522 / CIP 106686 / LMG 19005 / NCIMB 14063 / MR-1)).